The following is a 1091-amino-acid chain: MSRHEKTKSTGGGLLDSLFGRPSKSKGGTISSGTLAHGGRPVSADNYVVPGVEDFEQYIQQLSVAELDAKFLEIIEDMNIPKDKREPLLAKSKEERQKMIMWHLKGKNSLERSANSRFEKPIDYVEYLQNGEHSTHKVYQCVESLRVALTSNPISWIKEFGVAGIGTIEKLLARSKNNASYEKIEFEAIRCLKAIMNNTWGLNVVLNPDQHSVVLLLAQSLDPRKPQTMCEALKLLASFCIVYERNGYEKVLRAITTIAATSFKASERFRPIVDALFASDQQDPKRDLACHSLIFINTLTNTPTDLNFRLHLRCEIMRMGLYDRLDEFTKIVEASNNENLQQHFKIFNEIREDDFEEFVQRFDNVTFNMDDATDCFDVLKNLVTDTTSEPYFLSILQHLLYIRDDFYFRPAYYQLIEECISQIVFHKGYCDPNFENRNFNIDTSLLLDDIVEKAKAKESKRSEEYEKKIEQLESAKQEAEAKAAHLEEKVKLMEANGVAAPSPNKLPKVNIPMPPPPPGGGGAPPPPPPPMPGRAGGGPPPPPPPPMPGRAGGPPPPPPPPGMGGPPPPPMPGMMRPGGGPPPPPMMMGPMVPVLPHGLKPKKKWDVKNPMKRANWKAIVPAKMSDKAFWVKCQEDKLAQDDFLAELAVKFSSKPVKKEQKDAVDKPTTLTKKNVDLRVLDSKTAQNLAIMLGGSLKHLSYEQIKICLLRCDTDILSSNILQQLIQYLPPPEHLKRLQEIKAKGEPLPPIEQFAATIGEIKRLSPRLHNLNFKLTYADMVQDIKPDIVAGTAACEEIRNSKKFSKILELILLLGNYMNSGSKNEAAFGFEISYLTKLSNTKDADNKQTLLHYLADLVEKKFPDALNFYDDLSHVNKASRVNMDAIQKAMRQMNSAVKNLETDLQNNKVPQCDDDKFSEVMGKFAEECRQQVDVLGKMQLQMEKLYKDLSEYYAFDPSKYTMEEFFADIKTFKDAFQAAHNDNVRVREELEKKRRLQEAREQSAREQQERQQRKKAVVDMDAPQTQEGVMDSLLEALQTGSAFGQRNRQARRQRPAGAERRAQLSRSRSRTRVTNGQLMTREMILNEVLGSA.

Positions 1-37 are disordered; that stretch reads MSRHEKTKSTGGGLLDSLFGRPSKSKGGTISSGTLAH. A basic region region spans residues 1-56; it reads MSRHEKTKSTGGGLLDSLFGRPSKSKGGTISSGTLAHGGRPVSADNYVVPGVEDFE. Residues 25 to 34 are compositionally biased toward low complexity; it reads SKGGTISSGT. The 373-residue stretch at 59-431 folds into the GBD/FH3 domain; sequence IQQLSVAELD…QIVFHKGYCD (373 aa). A coiled-coil region spans residues 455–496; that stretch reads KAKESKRSEEYEKKIEQLESAKQEAEAKAAHLEEKVKLMEAN. Disordered stretches follow at residues 499–589, 994–1021, and 1039–1072; these read AAPS…MMMG, RLQEAREQSAREQQERQQRKKAVVDMDA, and GSAFGQRNRQARRQRPAGAERRAQLSRSRSRTRV. A compositionally biased stretch (pro residues) spans 512–572; that stretch reads PMPPPPPGGG…MGGPPPPPMP (61 aa). Residues 512-596 enclose the FH1 domain; sequence PMPPPPPGGG…MMGPMVPVLP (85 aa). The 401-residue stretch at 601–1001 folds into the FH2 domain; that stretch reads PKKKWDVKNP…KRRLQEAREQ (401 aa). Residues 994 to 1010 are compositionally biased toward basic and acidic residues; that stretch reads RLQEAREQSAREQQERQ. The DAD domain maps to 1022 to 1054; that stretch reads PQTQEGVMDSLLEALQTGSAFGQRNRQARRQRP.

This sequence belongs to the formin homology family. Diaphanous subfamily. As to quaternary structure, may interact (via CBD/FH3 domain) with Rho1.

The protein localises to the cytoplasm. It localises to the cytoskeleton. Its subcellular location is the cleavage furrow. The protein resides in the apical cell membrane. Required for cytokinesis in both mitosis and meiosis. Has a role in actin cytoskeleton organization and is essential for many, if not all, actin-mediated events involving membrane invagination. May serve as a mediator between signaling molecules and actin organizers at specific phases of the cell cycle. Possible component of the contractile ring or may control its function. This is Protein diaphanous (dia) from Drosophila melanogaster (Fruit fly).